The sequence spans 387 residues: Galactokinase (387 aa).

A substrate-binding site is contributed by 33–36 (EHTD). ATP-binding positions include Ser67 and 124-130 (GAGLSSS). Mg(2+) is bound by residues Ser130 and Glu162. The active-site Proton acceptor is the Asp174. A substrate-binding site is contributed by Tyr224.

The protein belongs to the GHMP kinase family. GalK subfamily.

The protein resides in the cytoplasm. It catalyses the reaction alpha-D-galactose + ATP = alpha-D-galactose 1-phosphate + ADP + H(+). It functions in the pathway carbohydrate metabolism; galactose metabolism. In terms of biological role, catalyzes the transfer of the gamma-phosphate of ATP to D-galactose to form alpha-D-galactose-1-phosphate (Gal-1-P). This chain is Galactokinase, found in Lactiplantibacillus plantarum (strain ATCC BAA-793 / NCIMB 8826 / WCFS1) (Lactobacillus plantarum).